The sequence spans 477 residues: AAA-ATPase At3g28600 (477 aa).

The signal sequence occupies residues 1–26 (MMMGNTFGSSLASLFFLWATIQQIFP). Position 245–252 (245–252 (GPPGTGKS)) interacts with ATP.

This sequence belongs to the AAA ATPase family. BCS1 subfamily. It depends on Mg(2+) as a cofactor.

The enzyme catalyses ATP + H2O = ADP + phosphate + H(+). The protein is AAA-ATPase At3g28600 of Arabidopsis thaliana (Mouse-ear cress).